The following is a 673-amino-acid chain: DNA ligase (673 aa).

NAD(+)-binding positions include 32 to 36, 81 to 82, and glutamate 111; these read DHVYD and SL. Lysine 113 functions as the N6-AMP-lysine intermediate in the catalytic mechanism. 4 residues coordinate NAD(+): arginine 134, glutamate 171, lysine 286, and lysine 310. Positions 404, 407, 422, and 428 each coordinate Zn(2+). Residues 595–673 enclose the BRCT domain; it reads NIIDEYKNKT…NEFWKKDNNF (79 aa).

The protein belongs to the NAD-dependent DNA ligase family. LigA subfamily. Mg(2+) serves as cofactor. Requires Mn(2+) as cofactor.

The enzyme catalyses NAD(+) + (deoxyribonucleotide)n-3'-hydroxyl + 5'-phospho-(deoxyribonucleotide)m = (deoxyribonucleotide)n+m + AMP + beta-nicotinamide D-nucleotide.. Its function is as follows. DNA ligase that catalyzes the formation of phosphodiester linkages between 5'-phosphoryl and 3'-hydroxyl groups in double-stranded DNA using NAD as a coenzyme and as the energy source for the reaction. It is essential for DNA replication and repair of damaged DNA. In Ureaplasma parvum serovar 3 (strain ATCC 27815 / 27 / NCTC 11736), this protein is DNA ligase.